The following is a 409-amino-acid chain: MLEFLFISLLWLFKPIYFLLFTVMFSFLIFNNFSWGGLFLVLDSYSFILLIVMSLFILGIIVISEKNNNLLILSEILVFICIIFFIPSNMMMLYMFFELSMFPILVMILGYGSQIEKINSSYYLMFYAAFCSFPFLFVYFKSNFLLVFTYYNFVISWEMFFILSLSFMMKFPIYFLHLWLPKAHVEAPTTASMLLAGLLLKLGTAGFLRILGSLSFVHNNVWILIAFLGMILGSFCCVFQSDSKALAAYSSVTHMSFLLLSLVFITMSSKISSVMLMLAHGYTSTLMFYLIGEFYHTSGSRMIYFMSSFFSSSMIMGILFSVVFLSNSGVPPSLSFLSEFLVISNSMLISKSMFVMIFIYFVVSFYYSLFLITSSLMGKGYHNFNTWNVGFSAPLVLMMYNVFWLSVFY.

The next 13 membrane-spanning stretches (helical) occupy residues 10 to 30 (LWLF…FLIF), 44 to 64 (SYSF…IVIS), 76 to 96 (ILVF…LYMF), 98 to 118 (ELSM…IEKI), 120 to 140 (SSYY…FVYF), 160 to 180 (FFIL…HLWL), 194 to 214 (LLAG…LGSL), 221 to 241 (VWIL…VFQS), 245 to 265 (ALAA…LVFI), 271 to 291 (ISSV…FYLI), 305 to 325 (FMSS…VVFL), 353 to 373 (MFVM…FLIT), and 389 to 409 (VGFS…SVFY).

Belongs to the complex I subunit 4 family.

The protein localises to the mitochondrion membrane. It catalyses the reaction a ubiquinone + NADH + 5 H(+)(in) = a ubiquinol + NAD(+) + 4 H(+)(out). Core subunit of the mitochondrial membrane respiratory chain NADH dehydrogenase (Complex I) that is believed to belong to the minimal assembly required for catalysis. Complex I functions in the transfer of electrons from NADH to the respiratory chain. The immediate electron acceptor for the enzyme is believed to be ubiquinone. The protein is NADH-ubiquinone oxidoreductase chain 4 of Caenorhabditis elegans.